The chain runs to 248 residues: ATP synthase subunit a, chloroplastic (248 aa).

5 consecutive transmembrane segments (helical) span residues Gln-38–Val-58, Val-96–Leu-116, Ile-135–Ser-155, Leu-200–Leu-220, and Gly-221–Gly-241.

Belongs to the ATPase A chain family. F-type ATPases have 2 components, CF(1) - the catalytic core - and CF(0) - the membrane proton channel. CF(1) has five subunits: alpha(3), beta(3), gamma(1), delta(1), epsilon(1). CF(0) has four main subunits: a, b, b' and c.

It is found in the plastid. It localises to the chloroplast thylakoid membrane. Functionally, key component of the proton channel; it plays a direct role in the translocation of protons across the membrane. The protein is ATP synthase subunit a, chloroplastic of Amborella trichopoda.